Consider the following 384-residue polypeptide: Dihydrolipoyllysine-residue acetyltransferase component of pyruvate dehydrogenase complex (384 aa).

A Lipoyl-binding domain is found at 2 to 77 (ANEFKFTDVG…SIGQVMAVIG (76 aa)). Residue K43 is modified to N6-lipoyllysine. Residue H356 is part of the active site.

This sequence belongs to the 2-oxoacid dehydrogenase family. In terms of assembly, forms a 24-polypeptide structural core with octahedral symmetry. It depends on (R)-lipoate as a cofactor.

The catalysed reaction is N(6)-[(R)-dihydrolipoyl]-L-lysyl-[protein] + acetyl-CoA = N(6)-[(R)-S(8)-acetyldihydrolipoyl]-L-lysyl-[protein] + CoA. In terms of biological role, the pyruvate dehydrogenase complex catalyzes the overall conversion of pyruvate to acetyl-CoA and CO(2). It contains multiple copies of three enzymatic components: pyruvate dehydrogenase (E1), dihydrolipoamide acetyltransferase (E2) and lipoamide dehydrogenase (E3). The chain is Dihydrolipoyllysine-residue acetyltransferase component of pyruvate dehydrogenase complex (pdhC) from Mycoplasma genitalium (strain ATCC 33530 / DSM 19775 / NCTC 10195 / G37) (Mycoplasmoides genitalium).